A 508-amino-acid chain; its full sequence is MGKKKNSKAYSEELTDTTRPLLEFRYGNPLFAIACHPEQSVIVSGLATGHMFCHKYNAAELKEAQLKRLRKHDAGSKDDRKKLWEVVEVPGVETSGVSLLWTTKRHKGSVRCICFDADGTHIYSVGTDNVLKKADTLTGKVVKKCVLDPGQNVKYTKLVKSATHPLVLLGDENGNVTVLNSESLEQTNLIKSIHNGDAINDIFHFAKKSVYRYISLGQTTLAHWDSRESNEGDFAIAADDKQAKRKVILSDDQEDEILCGTFVDPEDGEVLVCGMGEGVLTVWRPKKNGLADQLTRIKVKKNESIDCIVPTLEDDGCVWCGCSDGNIYKVHVNRGTIIEVRKHSKLDEVTFLDLDSEYRLLSGGLDKAKLWDSEKSEQLTPGSDADDRVSNSSPSAGKSSESDSNDSENDATSSGGSSDEDSSSDESEHSDASDVEEELVGLTREQIIAELDKDLVEESEDVEDVRSQRKRKHGADLPTNANGKKQKGKNIKPERSMKTHGIRRFEGL.

WD repeat units lie at residues 46–94, 105–144, 150–189, 194–234, 252–293, and 344–381; these read LATG…GVET, RHKG…VVKK, GQNV…QTNL, HNGD…EGDF, DQED…LADQ, and SKLD…QLTP. Residues 372 to 508 are disordered; sequence DSEKSEQLTP…THGIRRFEGL (137 aa). The segment covering 491–508 has biased composition (basic and acidic residues); that stretch reads IKPERSMKTHGIRRFEGL.

This sequence belongs to the WD repeat WDR55 family.

The protein localises to the nucleus. The protein resides in the nucleolus. The protein is WD repeat-containing protein JIP5 (JIP5) of Eremothecium gossypii (strain ATCC 10895 / CBS 109.51 / FGSC 9923 / NRRL Y-1056) (Yeast).